A 192-amino-acid polypeptide reads, in one-letter code: BON1-associated protein 1 (192 aa).

In terms of domain architecture, C2 spans 1–119; the sequence is MIYFGRSIDN…RYSPEGHLNF (119 aa).

In terms of assembly, interacts with BON1 (via VWA domain), BON2 and BON3. In terms of tissue distribution, expressed in roots, leaves, stems and flowers.

The protein resides in the membrane. Negative regulator of cell death and defense responses. Exhibits calcium-dependent phospholipid binding properties. The sequence is that of BON1-associated protein 1 (BAP1) from Arabidopsis thaliana (Mouse-ear cress).